We begin with the raw amino-acid sequence, 946 residues long: Probable leucine-rich repeat receptor-like protein kinase At5g49770 (946 aa).

An N-terminal signal peptide occupies residues 1 to 25 (MKMSSRIGLFKLLILLFFQIYSVYA). Residues 26–561 (FTDGSDFTAL…LEDSKTVSMK (536 aa)) are Extracellular-facing. 14 LRR repeats span residues 67-91 (DNRV…ISTL), 92-116 (SELQ…IGNL), 118-140 (KLTF…IGNL), 141-164 (EQLT…MGRL), 166-191 (KLYW…SLPG), 195-219 (LLQT…LFSS), 221-244 (MTLL…LGLV), 245-268 (QNLT…LNNL), 269-293 (TNLQ…SLTS), 295-314 (YTLD…SWIP), 316-340 (LNSL…LFSP), 342-365 (QLQT…NYSK), 367-387 (LDFV…ANNP), and 389-407 (NVML…QLSG). N-linked (GlcNAc...) asparagine glycans are attached at residues Asn246, Asn267, and Asn287. Residues Asn354 and Asn362 are each glycosylated (N-linked (GlcNAc...) asparagine). 4 N-linked (GlcNAc...) asparagine glycosylation sites follow: Asn415, Asn460, Asn489, and Asn514. A helical membrane pass occupies residues 562-582 (VIIGVVVGVVVLLLLLALAGI). Over 583–946 (YALRQKKRAQ…YTGVFPTPKP (364 aa)) the chain is Cytoplasmic. The region spanning 634-908 (FSDANDVGGG…EVVQELESIL (275 aa)) is the Protein kinase domain. ATP contacts are provided by residues 640–648 (VGGGGYGQV) and Lys662. Asp758 acts as the Proton acceptor in catalysis. The disordered stretch occupies residues 919–946 (SATYEEASGDPYGRDSFEYTGVFPTPKP).

The protein belongs to the protein kinase superfamily. Ser/Thr protein kinase family.

The protein localises to the membrane. The catalysed reaction is L-seryl-[protein] + ATP = O-phospho-L-seryl-[protein] + ADP + H(+). It carries out the reaction L-threonyl-[protein] + ATP = O-phospho-L-threonyl-[protein] + ADP + H(+). This Arabidopsis thaliana (Mouse-ear cress) protein is Probable leucine-rich repeat receptor-like protein kinase At5g49770.